The primary structure comprises 474 residues: Ribosomal protein uS12 methylthiotransferase RimO (474 aa).

The region spanning 37–147 (NRIGFVSLGC…VLNHVHKYVP (111 aa)) is the MTTase N-terminal domain. Residues Cys46, Cys82, Cys111, Cys179, Cys183, and Cys186 each coordinate [4Fe-4S] cluster. A Radical SAM core domain is found at 165–402 (LTPKHYAYLK…MEVQAEISAE (238 aa)). Positions 405 to 471 (ARLVGRELDI…EHDLWAELVA (67 aa)) constitute a TRAM domain.

It belongs to the methylthiotransferase family. RimO subfamily. [4Fe-4S] cluster serves as cofactor.

Its subcellular location is the cytoplasm. The enzyme catalyses L-aspartate(89)-[ribosomal protein uS12]-hydrogen + (sulfur carrier)-SH + AH2 + 2 S-adenosyl-L-methionine = 3-methylsulfanyl-L-aspartate(89)-[ribosomal protein uS12]-hydrogen + (sulfur carrier)-H + 5'-deoxyadenosine + L-methionine + A + S-adenosyl-L-homocysteine + 2 H(+). In terms of biological role, catalyzes the methylthiolation of an aspartic acid residue of ribosomal protein uS12. The polypeptide is Ribosomal protein uS12 methylthiotransferase RimO (Shewanella amazonensis (strain ATCC BAA-1098 / SB2B)).